A 265-amino-acid chain; its full sequence is Glutamate racemase (265 aa).

Residues 12 to 13 and 44 to 45 contribute to the substrate site; these read DS and YG. C75 serves as the catalytic Proton donor/acceptor. Substrate is bound at residue 76–77; sequence NT. C186 acts as the Proton donor/acceptor in catalysis. 187–188 lines the substrate pocket; that stretch reads TH.

It belongs to the aspartate/glutamate racemases family.

The catalysed reaction is L-glutamate = D-glutamate. The protein operates within cell wall biogenesis; peptidoglycan biosynthesis. Functionally, provides the (R)-glutamate required for cell wall biosynthesis. The chain is Glutamate racemase from Pseudomonas putida (strain ATCC 700007 / DSM 6899 / JCM 31910 / BCRC 17059 / LMG 24140 / F1).